A 629-amino-acid chain; its full sequence is Hemocyanin C chain (629 aa).

Positions 175, 179, 206, 326, 330, and 366 each coordinate Cu cation. N-linked (GlcNAc...) asparagine glycosylation occurs at N451. An intrachain disulfide couples C537 to C585. The N-linked (GlcNAc...) asparagine glycan is linked to N618.

Belongs to the tyrosinase family. Hemocyanin subfamily. As to quaternary structure, tarantula hemocyanin is a 24-chain polymer with seven different chains identified. In terms of tissue distribution, hemolymph.

Its subcellular location is the secreted. The protein localises to the extracellular space. Hemocyanins are copper-containing oxygen carriers occurring freely dissolved in the hemolymph of many mollusks and arthropods. This chain is Hemocyanin C chain (HCC), found in Aphonopelma sp. (American tarantula).